Here is a 236-residue protein sequence, read N- to C-terminus: Purine nucleoside phosphorylase DeoD-type 2 (236 aa).

His-5 is an a purine D-ribonucleoside binding site. Residues Gly-21, Arg-25, Arg-44, and 88–91 (RVGT) contribute to the phosphate site. Residues 180-182 (EME) and 204-205 (SD) each bind a purine D-ribonucleoside. Residue Asp-205 is the Proton donor of the active site.

It belongs to the PNP/UDP phosphorylase family. As to quaternary structure, homohexamer; trimer of homodimers.

The enzyme catalyses a purine D-ribonucleoside + phosphate = a purine nucleobase + alpha-D-ribose 1-phosphate. It carries out the reaction a purine 2'-deoxy-D-ribonucleoside + phosphate = a purine nucleobase + 2-deoxy-alpha-D-ribose 1-phosphate. Functionally, catalyzes the reversible phosphorolytic breakdown of the N-glycosidic bond in the beta-(deoxy)ribonucleoside molecules, with the formation of the corresponding free purine bases and pentose-1-phosphate. This is Purine nucleoside phosphorylase DeoD-type 2 from Shewanella oneidensis (strain ATCC 700550 / JCM 31522 / CIP 106686 / LMG 19005 / NCIMB 14063 / MR-1).